The primary structure comprises 354 residues: Sulfate/thiosulfate import ATP-binding protein CysA (354 aa).

The ABC transporter domain occupies 3-237 (IEVRGLSKRF…PATPFVYGFL (235 aa)). Residue 35–42 (GPSGCGKT) coordinates ATP.

Belongs to the ABC transporter superfamily. Sulfate/tungstate importer (TC 3.A.1.6) family. In terms of assembly, the complex is composed of two ATP-binding proteins (CysA), two transmembrane proteins (CysT and CysW) and a solute-binding protein (CysP).

Its subcellular location is the cell inner membrane. The catalysed reaction is sulfate(out) + ATP + H2O = sulfate(in) + ADP + phosphate + H(+). It carries out the reaction thiosulfate(out) + ATP + H2O = thiosulfate(in) + ADP + phosphate + H(+). Part of the ABC transporter complex CysAWTP involved in sulfate/thiosulfate import. Responsible for energy coupling to the transport system. This is Sulfate/thiosulfate import ATP-binding protein CysA from Bordetella pertussis (strain Tohama I / ATCC BAA-589 / NCTC 13251).